The following is a 111-amino-acid chain: Large ribosomal subunit protein uL22 (111 aa).

Belongs to the universal ribosomal protein uL22 family. In terms of assembly, part of the 50S ribosomal subunit.

In terms of biological role, this protein binds specifically to 23S rRNA; its binding is stimulated by other ribosomal proteins, e.g. L4, L17, and L20. It is important during the early stages of 50S assembly. It makes multiple contacts with different domains of the 23S rRNA in the assembled 50S subunit and ribosome. Its function is as follows. The globular domain of the protein is located near the polypeptide exit tunnel on the outside of the subunit, while an extended beta-hairpin is found that lines the wall of the exit tunnel in the center of the 70S ribosome. The polypeptide is Large ribosomal subunit protein uL22 (Xylella fastidiosa (strain 9a5c)).